A 129-amino-acid polypeptide reads, in one-letter code: Iron-sulfur cluster assembly 1 homolog, mitochondrial (129 aa).

The transit peptide at 1 to 12 (MSASLVRATVRA) directs the protein to the mitochondrion. C57, C121, and C123 together coordinate Fe cation.

The protein belongs to the HesB/IscA family. In terms of assembly, interacts with CRY2, but not with CRY1 (in vitro).

Its subcellular location is the mitochondrion. Involved in the maturation of mitochondrial 4Fe-4S proteins functioning late in the iron-sulfur cluster assembly pathway. Probably involved in the binding of an intermediate of Fe/S cluster assembly. This Mus musculus (Mouse) protein is Iron-sulfur cluster assembly 1 homolog, mitochondrial (Isca1).